The sequence spans 679 residues: ATP-dependent zinc metalloprotease FtsH (679 aa).

The Cytoplasmic portion of the chain corresponds to 1–6 (MNRIFR). The helical transmembrane segment at 7 to 27 (NTIFYLLIFLVIVGIVSVFNS) threads the bilayer. Topologically, residues 28–114 (DQTETENVSF…IEPADETSGW (87 aa)) are extracellular. Residues 115–135 (VQFFTGIIPFIIIFILFFFLL) form a helical membrane-spanning segment. Residues 136–679 (SQAQGGGSRV…SFEDDTNKKE (544 aa)) are Cytoplasmic-facing. 206-213 (GPPGTGKT) contacts ATP. His-428 lines the Zn(2+) pocket. Glu-429 is an active-site residue. Residues His-432 and Asp-504 each coordinate Zn(2+). 2 stretches are compositionally biased toward basic and acidic residues: residues 621–642 (LEKE…KEET) and 658–679 (PIEK…NKKE). Residues 621 to 679 (LEKEKASESDVKVNINSKKEETPQVEAEQPQEPNTDEPIEKDPSVEDNRSFEDDTNKKE) are disordered.

It in the central section; belongs to the AAA ATPase family. In the C-terminal section; belongs to the peptidase M41 family. As to quaternary structure, homohexamer. Zn(2+) is required as a cofactor.

The protein localises to the cell membrane. Functionally, acts as a processive, ATP-dependent zinc metallopeptidase for both cytoplasmic and membrane proteins. Plays a role in the quality control of integral membrane proteins. The chain is ATP-dependent zinc metalloprotease FtsH from Alkalihalophilus pseudofirmus (strain ATCC BAA-2126 / JCM 17055 / OF4) (Bacillus pseudofirmus).